The sequence spans 145 residues: Ribosomal RNA large subunit methyltransferase H (145 aa).

S-adenosyl-L-methionine-binding positions include L64, G93, and L112–F117.

Belongs to the RNA methyltransferase RlmH family. Homodimer.

It is found in the cytoplasm. It carries out the reaction pseudouridine(1915) in 23S rRNA + S-adenosyl-L-methionine = N(3)-methylpseudouridine(1915) in 23S rRNA + S-adenosyl-L-homocysteine + H(+). Functionally, specifically methylates the pseudouridine at position 1915 (m3Psi1915) in 23S rRNA. This is Ribosomal RNA large subunit methyltransferase H from Prochlorococcus marinus (strain NATL1A).